The primary structure comprises 391 residues: Mannonate dehydratase (391 aa).

The disordered stretch occupies residues 334 to 359; that stretch reads ERRRERDGGPRLPLRPDHGHHLLDDL.

Belongs to the mannonate dehydratase family. The cofactor is Fe(2+). Mn(2+) serves as cofactor.

It catalyses the reaction D-mannonate = 2-dehydro-3-deoxy-D-gluconate + H2O. The protein operates within carbohydrate metabolism; pentose and glucuronate interconversion. In terms of biological role, catalyzes the dehydration of D-mannonate. In Chromohalobacter salexigens (strain ATCC BAA-138 / DSM 3043 / CIP 106854 / NCIMB 13768 / 1H11), this protein is Mannonate dehydratase.